The following is a 975-amino-acid chain: Glycine dehydrogenase (decarboxylating) (975 aa).

N6-(pyridoxal phosphate)lysine is present on Lys-723.

It belongs to the GcvP family. The glycine cleavage system is composed of four proteins: P, T, L and H. Requires pyridoxal 5'-phosphate as cofactor.

It catalyses the reaction N(6)-[(R)-lipoyl]-L-lysyl-[glycine-cleavage complex H protein] + glycine + H(+) = N(6)-[(R)-S(8)-aminomethyldihydrolipoyl]-L-lysyl-[glycine-cleavage complex H protein] + CO2. The glycine cleavage system catalyzes the degradation of glycine. The P protein binds the alpha-amino group of glycine through its pyridoxal phosphate cofactor; CO(2) is released and the remaining methylamine moiety is then transferred to the lipoamide cofactor of the H protein. In Burkholderia ambifaria (strain MC40-6), this protein is Glycine dehydrogenase (decarboxylating).